Consider the following 1138-residue polypeptide: Condensin-2 complex subunit G2 (1138 aa).

The residue at position 30 (Ser-30) is a Phosphoserine. The stretch at 459–497 (LLPTLRYSLHDNSEKVRVAFVDLLLKIKAVRAAKFWKIC) is one HEAT repeat. Thr-1114 carries the post-translational modification Phosphothreonine.

As to quaternary structure, component of the condensin-2 complex, which contains the SMC2 and SMC4 heterodimer, and 3 non SMC subunits that probably regulate the complex: NCAPH2, NCAPD3 and NCAPG2. In terms of tissue distribution, expressed in spleen, lung and testis as well as in hematopoietic cell lines.

It is found in the nucleus. Its function is as follows. Regulatory subunit of the condensin-2 complex, a complex which establishes mitotic chromosome architecture and is involved in physical rigidity of the chromatid axis. Is required for early embryonic development and is essential for viability and expansion of the inner cell mass (ICM) of the implanting blastocyst. This is Condensin-2 complex subunit G2 (Ncapg2) from Mus musculus (Mouse).